The following is a 435-amino-acid chain: GTPase Obg (435 aa).

The 159-residue stretch at 1-159 (MAFIDKCKIV…IEVVLELKTI (159 aa)) folds into the Obg domain. The OBG-type G domain occupies 160–329 (ADIGIIGLPN…MLDDVIKIYF (170 aa)). GTP-binding positions include 166–173 (GLPNAGKS), 191–195 (FTTLN), 212–215 (DIPG), 282–285 (NKID), and 310–312 (SAL). Residues Ser-173 and Thr-193 each coordinate Mg(2+). Residues 355-435 (TPKNKELDKT…IYDITLEFEE (81 aa)) enclose the OCT domain.

The protein belongs to the TRAFAC class OBG-HflX-like GTPase superfamily. OBG GTPase family. Monomer. It depends on Mg(2+) as a cofactor.

It localises to the cytoplasm. Functionally, an essential GTPase which binds GTP, GDP and possibly (p)ppGpp with moderate affinity, with high nucleotide exchange rates and a fairly low GTP hydrolysis rate. Plays a role in control of the cell cycle, stress response, ribosome biogenesis and in those bacteria that undergo differentiation, in morphogenesis control. The polypeptide is GTPase Obg (Ureaplasma urealyticum serovar 10 (strain ATCC 33699 / Western)).